Here is a 268-residue protein sequence, read N- to C-terminus: Phosphatidylglycerol--prolipoprotein diacylglyceryl transferase (268 aa).

7 helical membrane-spanning segments follow: residues 27–47 (PALR…MWLL), 66–86 (LLFY…VLFY), 104–124 (GGMS…YIAW), 130–150 (FFAV…AGRI), 181–201 (PSQL…LYWF), 208–228 (VGAV…IVET), and 242–262 (FMTM…YLIL). Residue Arg-149 coordinates a 1,2-diacyl-sn-glycero-3-phospho-(1'-sn-glycerol).

The protein belongs to the Lgt family.

The protein resides in the cell inner membrane. It catalyses the reaction L-cysteinyl-[prolipoprotein] + a 1,2-diacyl-sn-glycero-3-phospho-(1'-sn-glycerol) = an S-1,2-diacyl-sn-glyceryl-L-cysteinyl-[prolipoprotein] + sn-glycerol 1-phosphate + H(+). The protein operates within protein modification; lipoprotein biosynthesis (diacylglyceryl transfer). Its function is as follows. Catalyzes the transfer of the diacylglyceryl group from phosphatidylglycerol to the sulfhydryl group of the N-terminal cysteine of a prolipoprotein, the first step in the formation of mature lipoproteins. This Shewanella sp. (strain MR-4) protein is Phosphatidylglycerol--prolipoprotein diacylglyceryl transferase.